We begin with the raw amino-acid sequence, 879 residues long: Putative ankyrin repeat protein L88 (879 aa).

ANK repeat units follow at residues 22–62 (KGFT…QKNK), 63–96 (KGYT…KTNI), 100–133 (EGIT…DINA), 137–170 (NGYT…NIDD), 174–207 (NGLT…DINA), 211–241 (NGRT…DIEA), 245–278 (KGLT…NIEA), 282–313 (KLRT…NIET), 317–347 (RNNT…NINH), 351–384 (EGCN…NINN), 387–420 (SERT…DPNI), 424–463 (NGNT…NPNF), 470–499 (NSLT…DINS), 506–542 (SALL…DVNI), 546–578 (NGNT…NPNT), 674–704 (SGIT…DPNI), and 708–738 (KGET…NPYI).

This is Putative ankyrin repeat protein L88 from Acanthamoeba polyphaga mimivirus (APMV).